Consider the following 423-residue polypeptide: Glutamate-1-semialdehyde 2,1-aminomutase (423 aa).

At Lys259 the chain carries N6-(pyridoxal phosphate)lysine.

Belongs to the class-III pyridoxal-phosphate-dependent aminotransferase family. HemL subfamily. Homodimer. Pyridoxal 5'-phosphate serves as cofactor.

Its subcellular location is the cytoplasm. The enzyme catalyses (S)-4-amino-5-oxopentanoate = 5-aminolevulinate. The protein operates within porphyrin-containing compound metabolism; protoporphyrin-IX biosynthesis; 5-aminolevulinate from L-glutamyl-tRNA(Glu): step 2/2. The polypeptide is Glutamate-1-semialdehyde 2,1-aminomutase (Thermosipho africanus (strain TCF52B)).